The sequence spans 123 residues: MAKIKARDLRGKKKEELLKQLDDLKVELSQLRVAKVTGGAASKLSKIRVVRKSIARVLTVINQTQKENLRKFYKGKKYKPLDLRPKKTRALRRRLNKHEEGLRTKKQQRKDRLFSARKFAVKA.

Belongs to the universal ribosomal protein uL29 family. Component of the large ribosomal subunit.

Its subcellular location is the cytoplasm. In terms of biological role, component of the large ribosomal subunit. The ribosome is a large ribonucleoprotein complex responsible for the synthesis of proteins in the cell. This chain is Large ribosomal subunit protein uL29 (rpl35), found in Xenopus tropicalis (Western clawed frog).